Consider the following 370-residue polypeptide: Peptidyl-prolyl cis-trans isomerase D (370 aa).

Serine 5 is subject to Phosphoserine. The region spanning 19-183 (FFDVDIGGER…KLCVIAECGE (165 aa)) is the PPIase cyclophilin-type domain. Residue lysine 171 is modified to N6-acetyllysine. The tract at residues 185 to 215 (KEGDEWGIFPKDGSGDSHPDFPEDADIDLKD) is chaperone activity. Serine 198 bears the Phosphoserine mark. The interaction with HSP90AB1 stretch occupies residues 214–370 (KDVDKILLIS…EKAVYAKMFA (157 aa)). 3 TPR repeats span residues 223-256 (SEDLKNIGNTFFKSQNWEMAIKKYAKVLRYLDSS), 273-306 (LSCVLNIGACKLKMSNWQGAIDSCLEALEMDPSN), and 308-340 (KALYRKAQGWQGLKEYDQALADLKKAQEIAPGD).

This sequence belongs to the cyclophilin-type PPIase family. PPIase D subfamily. Identified in ESR1 or NR3C1/GCR steroid receptor-chaperone complexes. Found in HSP90 chaperone complexes with kinase clients LCK or EIF2AK1. Two monomers associate with one HSP90 homodimer. Interacts with HSP90AA1. Interacts with HSP90AB1; PPID and FKBP4 compete for binding to HSP90AB1 and the interaction is mutually exclusive with the PPID:HSPA8 interaction. Interacts with HSPA8; PPID and STIP1 but not FKBP4 compete for binding to HSPA8 and the interaction is mutually exclusive with the PPID:HSP90AB1 interaction. Interacts with S100A1 and S100A2; the interactions dissociate the PPID:HSP90AA1 interaction. Interacts with S100A6. Interacts with MYB, ILF2, XRCC6, RACK1 and RPS3. Interacts with cytoplasmic dynein 1 intermediate chain (DYNC1I1 or DYNC1I2).

The protein resides in the cytoplasm. Its subcellular location is the nucleus. The protein localises to the nucleolus. It is found in the nucleoplasm. It carries out the reaction [protein]-peptidylproline (omega=180) = [protein]-peptidylproline (omega=0). Less sensitive to inhibition by cyclosporin A than is CYP-18. Its function is as follows. PPIase that catalyzes the cis-trans isomerization of proline imidic peptide bonds in oligopeptides and may therefore assist protein folding. Proposed to act as a co-chaperone in HSP90 complexes such as in unligated steroid receptors heterocomplexes. Different co-chaperones seem to compete for association with HSP90 thus establishing distinct HSP90-co-chaperone-receptor complexes with the potential to exert tissue-specific receptor activity control. May have a preference for estrogen receptor complexes and is not found in glucocorticoid receptor complexes. May be involved in cytoplasmic dynein-dependent movement of the receptor from the cytoplasm to the nucleus. May regulate MYB by inhibiting its DNA-binding activity. Involved in regulation of AHR signaling by promoting the formation of the AHR:ARNT dimer; the function is independent of HSP90 but requires the chaperone activity region. Involved in regulation of UV radiation-induced apoptosis. The chain is Peptidyl-prolyl cis-trans isomerase D from Rattus norvegicus (Rat).